A 229-amino-acid chain; its full sequence is Ribonuclease S-6 (229 aa).

Positions 1–27 (MGITGMIYMVPMVFSLIVLISCSSTMG) are cleaved as a signal peptide. RNA is bound at residue Gln-36. A disulfide bond links Cys-42 and Cys-49. His-60 is a binding site for RNA. The active-site Proton donor is the His-60. Cys-75 and Cys-119 are disulfide-bonded. 2 N-linked (GlcNAc) asparagine glycosylation sites follow: Asn-77 and Asn-87. Residues 98–99 (NV), Phe-108, 111–112 (RQ), and 115–116 (KH) each bind RNA. The active site involves Gln-112. The Proton acceptor role is filled by His-116. Asn-145 carries an N-linked (GlcNAc...) (high mannose) asparagine glycan. 2 cysteine pairs are disulfide-bonded: Cys-184–Cys-222 and Cys-199–Cys-210. Asn-188 is a glycosylation site (N-linked (GlcNAc) asparagine; alternate). 2 N-linked (GlcNAc...) asparagine; alternate glycosylation sites follow: Asn-188 and Asn-203.

Belongs to the RNase T2 family. In terms of processing, the N-glycans attached at Asn-188 and Asn-203 consist of either monosaccharide (GlcNAc) or disaccharide (GlcNAc-GlcNAc) that could not be distinguished.

It carries out the reaction a ribonucleotidyl-ribonucleotide-RNA + H2O = a 3'-end 3'-phospho-ribonucleotide-RNA + a 5'-end dephospho-ribonucleoside-RNA + H(+). Its function is as follows. Self-incompatibility (SI) is the inherited ability of a flowering plant to prevent self-fertilization by discriminating between self and non-self pollen during pollination. In many species, self-incompatibility is controlled by the single, multiallelic locus S. The chain is Ribonuclease S-6 from Pyrus pyrifolia (Chinese pear).